The chain runs to 494 residues: Cytochrome P450 2A13 (494 aa).

Asn297 is a binding site for substrate. Cys439 serves as a coordination point for heme.

This sequence belongs to the cytochrome P450 family. It depends on heme as a cofactor. In terms of tissue distribution, expressed in liver and a number of extrahepatic tissues, including nasal mucosa, lung, trachea, brain, mammary gland, prostate, testis, and uterus, but not in heart, kidney, bone marrow, colon, small intestine, spleen, stomach, thymus, or skeletal muscle.

Its subcellular location is the endoplasmic reticulum membrane. It is found in the microsome membrane. The catalysed reaction is an organic molecule + reduced [NADPH--hemoprotein reductase] + O2 = an alcohol + oxidized [NADPH--hemoprotein reductase] + H2O + H(+). Its function is as follows. Exhibits a coumarin 7-hydroxylase activity. Active in the metabolic activation of hexamethylphosphoramide, N,N-dimethylaniline, 2'-methoxyacetophenone, N-nitrosomethylphenylamine, and the tobacco-specific carcinogen, 4-(methylnitrosamino)-1-(3-pyridyl)-1-butanone. Possesses phenacetin O-deethylation activity. In Homo sapiens (Human), this protein is Cytochrome P450 2A13 (CYP2A13).